The chain runs to 129 residues: Large ribosomal subunit protein bL12 (129 aa).

The protein belongs to the bacterial ribosomal protein bL12 family. As to quaternary structure, homodimer. Part of the ribosomal stalk of the 50S ribosomal subunit. Forms a multimeric L10(L12)X complex, where L10 forms an elongated spine to which 2 to 4 L12 dimers bind in a sequential fashion. Binds GTP-bound translation factors.

Forms part of the ribosomal stalk which helps the ribosome interact with GTP-bound translation factors. Is thus essential for accurate translation. The protein is Large ribosomal subunit protein bL12 of Photobacterium profundum (strain SS9).